The chain runs to 259 residues: Secretion system apparatus protein SsaT (259 aa).

6 consecutive transmembrane segments (helical) span residues 9-29 (LIALAVAFIRPLSLSLLLPLL), 35-55 (GAALLRNGVLMSLTFPILPII), 78-98 (VIIGFSIGFCAAVPFWAVDMA), 127-147 (LLFSQFLCVIFFISGGMEFIL), 185-205 (ISFSLPAIICMVLADLALGLL), and 214-234 (VFFFSMPLKSILVLLTLLISF).

It belongs to the FliR/MopE/SpaR family.

Its subcellular location is the cell membrane. Part of a type III secretion system. In Salmonella typhimurium (strain LT2 / SGSC1412 / ATCC 700720), this protein is Secretion system apparatus protein SsaT (ssaT).